The following is a 98-amino-acid chain: U1-theraphotoxin-Ap1a (98 aa).

The first 23 residues, 1 to 23, serve as a signal peptide directing secretion; that stretch reads MRSLTLAAVLACSLLLVFHTSAA. Residues 24–50 constitute a propeptide that is removed on maturation; the sequence is EELEVQDGHLMNPGDGDTALATVDDER. 3 cysteine pairs are disulfide-bonded: cysteine 54–cysteine 84, cysteine 58–cysteine 90, and cysteine 72–cysteine 95. The segment at 63-84 is disordered; sequence DGKSKEGKPCKPKGDKNKDKKC.

This sequence belongs to the neurotoxin 12 (Hwtx-2) family. 01 (Ap1a) subfamily. Expressed by the venom gland.

It localises to the secreted. Its function is as follows. Is toxic to both insects and mammals. Induces reversible paralysis when injected into S.frugiperda larvae. Reduces both the amplitude and frequency of responses from muscle (GF-TTM and GF-DLM) pathways in the D.melanogaster giant fiber circuit, suggesting an action at the neuromuscular junction, which is mediated by glutamatergic receptors. In mice, intracranial injection of 30 ug causes increased urination, myoclonus, hypermotility with circular movements followed by respiratory and generalized seizures resulting in death within 25-35 minutes of injection. The protein is U1-theraphotoxin-Ap1a of Acanthoscurria paulensis (Brazilian giant black tarantula spider).